A 370-amino-acid polypeptide reads, in one-letter code: MYIQNLELTSYRNYDHAELQFENKVNVIIGENAQGKTNLMEAIYVLSMAKSHRTSNDKELIRWDKDYAKIEGRVMKQNGAIPMQLVISKKGKKGKVNHIEQQKLSQYVGALNTIMFAPEDLNLVKGSPQVRRRFLDMEIGQVSPVYLHDLSLYQKILSQRNHFLKQLQTRKQTDRTMLDVLTDQLVEVAAKVVVKRLQFTAQLEKWAQPIHAGISRGLEELTLKYHTALDVSDPLDLSKIGDSYQEAFSKLREKEIERGVTLSGPHRDDVLFYVNGRDVQTYGSQGQQRTTALSLKLAEIDLIHEEIGEYPILLLDDVLSELDDYRQSHLLHTIQGRVQTFVTTTSVDGIDHETLRQAGMFRVQNGALVK.

30-37 contributes to the ATP binding site; the sequence is GENAQGKT.

This sequence belongs to the RecF family. Recruited to foci following DNA damage; probably interacts with RecO.

The protein localises to the cytoplasm. It is found in the nucleoid. The RecF protein is involved in DNA metabolism; it is required for DNA replication and normal SOS inducibility. RecF binds preferentially to single-stranded, linear DNA. It also seems to bind ATP. Is recruited to repair centers, foci that are the site of double-strand DNA break(s) after RecN and RecO; recruitment may depend on RecO. A positive modulator of RecA. The sequence is that of DNA replication and repair protein RecF from Bacillus subtilis (strain 168).